The primary structure comprises 778 residues: Putative ATP-dependent RNA helicase MJ1505 (778 aa).

Residues I22–H186 form the Helicase ATP-binding domain. L35 to T42 contributes to the ATP binding site. The short motif at D137–H140 is the DEAH box element. In terms of domain architecture, Helicase C-terminal spans K338–K516.

It belongs to the DEAD box helicase family. DEAH subfamily.

The enzyme catalyses ATP + H2O = ADP + phosphate + H(+). This is Putative ATP-dependent RNA helicase MJ1505 from Methanocaldococcus jannaschii (strain ATCC 43067 / DSM 2661 / JAL-1 / JCM 10045 / NBRC 100440) (Methanococcus jannaschii).